Reading from the N-terminus, the 481-residue chain is UDP-N-acetylmuramoyl-L-alanyl-D-glutamate--L-lysine ligase (481 aa).

Position 42 (serine 42) interacts with UDP-N-acetyl-alpha-D-muramoyl-L-alanyl-D-glutamate. An ATP-binding site is contributed by glycine 118 to threonine 124. Residues glutamine 158, threonine 160–threonine 161, serine 187, and arginine 195 contribute to the UDP-N-acetyl-alpha-D-muramoyl-L-alanyl-D-glutamate site. Lysine 229 carries the post-translational modification N6-carboxylysine. The L-lysine recognition motif signature appears at aspartate 404–asparagine 407.

Belongs to the MurCDEF family. MurE subfamily. In terms of processing, carboxylation is probably crucial for Mg(2+) binding and, consequently, for the gamma-phosphate positioning of ATP.

It localises to the cytoplasm. The catalysed reaction is UDP-N-acetyl-alpha-D-muramoyl-L-alanyl-D-glutamate + L-lysine + ATP = UDP-N-acetyl-alpha-D-muramoyl-L-alanyl-gamma-D-glutamyl-L-lysine + ADP + phosphate + H(+). It participates in cell wall biogenesis; peptidoglycan biosynthesis. In terms of biological role, catalyzes the addition of L-lysine to the nucleotide precursor UDP-N-acetylmuramoyl-L-alanyl-D-glutamate (UMAG) in the biosynthesis of bacterial cell-wall peptidoglycan. The sequence is that of UDP-N-acetylmuramoyl-L-alanyl-D-glutamate--L-lysine ligase from Streptococcus pyogenes serotype M18 (strain MGAS8232).